We begin with the raw amino-acid sequence, 568 residues long: DNA mismatch repair protein MutL (568 aa).

The protein belongs to the DNA mismatch repair MutL/HexB family.

Functionally, this protein is involved in the repair of mismatches in DNA. It is required for dam-dependent methyl-directed DNA mismatch repair. May act as a 'molecular matchmaker', a protein that promotes the formation of a stable complex between two or more DNA-binding proteins in an ATP-dependent manner without itself being part of a final effector complex. The protein is DNA mismatch repair protein MutL of Nostoc punctiforme (strain ATCC 29133 / PCC 73102).